The chain runs to 247 residues: Sortase A (247 aa).

Residues 1-9 (MRNKKKLHG) are Cytoplasmic-facing. The helical transmembrane segment at 10–30 (FFNFVRWLLVVLLIIVGLALV) threads the bilayer. The Extracellular segment spans residues 31 to 247 (FNKPIRNAFI…FSKKYNQINL (217 aa)). Histidine 140 (proton donor/acceptor) is an active-site residue. Catalysis depends on cysteine 206, which acts as the Acyl-thioester intermediate.

The protein belongs to the bacterial sortase family. Class A subfamily.

It is found in the cell membrane. Its function is as follows. Transpeptidase that anchors surface proteins to the cell wall. Recognizes and modifies its substrate by proteolytic cleavage of a C-terminal sorting signal. Following cleavage, a covalent intermediate is formed via a thioester bond between the sortase and its substrate, which is then transferred and covalently attached to the cell wall. This sortase recognizes a Leu-Pro-x-Thr-Gly (LPXTG) motif, which is cleaved by the sortase between the threonine and glycine residues. Essential for adherence to eukaryotic cells and for binding to fibronectin and fibrinogen. The protein is Sortase A of Streptococcus agalactiae serotype III (strain NEM316).